Here is a 164-residue protein sequence, read N- to C-terminus: Ecotin (164 aa).

Positions 1 to 20 (MKMFVPAVVFAALASASAWA) are cleaved as a signal peptide. C72 and C109 form a disulfide bridge.

Belongs to the protease inhibitor I11 (ecotin) family. Homodimer.

It is found in the periplasm. In terms of biological role, general inhibitor of pancreatic serine proteases: inhibits chymotrypsin, trypsin, elastases, factor X, kallikrein as well as a variety of other proteases. The protein is Ecotin of Salmonella enteritidis PT4 (strain P125109).